Reading from the N-terminus, the 1092-residue chain is Probable cellulose synthase A catalytic subunit 6 [UDP-forming] (1092 aa).

The Cytoplasmic portion of the chain corresponds to Met-1–Met-280. The Zn(2+) site is built by Cys-42, Cys-45, Cys-61, Cys-64, Cys-69, Cys-72, Cys-84, and Cys-87. The RING-type; degenerate zinc-finger motif lies at Cys-42–Lys-88. Residues Val-100–Asp-123 are disordered. The segment covering Asp-103 to Phe-116 has biased composition (acidic residues). A helical transmembrane segment spans residues Ile-281–Val-301. The Extracellular segment spans residues Asn-302–Asp-303. The helical transmembrane segment at Ala-304–Leu-324 threads the bilayer. The Cytoplasmic portion of the chain corresponds to Asp-325–Ser-868. UDP-alpha-D-glucose is bound by residues Ser-363, Lys-369, Glu-370, and Asp-399. The active site involves Asp-399. A coiled-coil region spans residues Val-453 to Val-480. Residue Lys-540 coordinates UDP-alpha-D-glucose. Lys-541 and Asp-565 together coordinate Mn(2+). Asp-792 is an active-site residue. A helical transmembrane segment spans residues Ile-869–Leu-889. The Extracellular portion of the chain corresponds to Leu-890 to Asn-901. A helical membrane pass occupies residues Val-902–Met-922. Residues Arg-923–Gln-937 lie on the Cytoplasmic side of the membrane. The helical transmembrane segment at Phe-938–Val-958 threads the bilayer. The Extracellular segment spans residues Leu-959–Thr-987. Residues Thr-988–Val-1008 traverse the membrane as a helical segment. Residues Ser-1009–Trp-1019 are Cytoplasmic-facing. A helical transmembrane segment spans residues Gly-1020 to Leu-1040. Residues Lys-1041–Arg-1049 are Extracellular-facing. A helical membrane pass occupies residues Thr-1050–Val-1070. Topologically, residues Arg-1071 to Asn-1092 are cytoplasmic.

The protein belongs to the glycosyltransferase 2 family. Plant cellulose synthase subfamily. The cofactor is Mn(2+). Zn(2+) serves as cofactor.

It is found in the cell membrane. The enzyme catalyses [(1-&gt;4)-beta-D-glucosyl](n) + UDP-alpha-D-glucose = [(1-&gt;4)-beta-D-glucosyl](n+1) + UDP + H(+). It participates in glycan metabolism; plant cellulose biosynthesis. In terms of biological role, probable catalytic subunit of cellulose synthase terminal complexes ('rosettes'), required for beta-1,4-glucan microfibril crystallization, a major mechanism of the cell wall formation. The protein is Probable cellulose synthase A catalytic subunit 6 [UDP-forming] (CESA6) of Oryza sativa subsp. japonica (Rice).